The following is a 582-amino-acid chain: uncharacterized protein (582 aa).

Positions 1–23 are enriched in basic and acidic residues; sequence MAHEGSRQVRDRGVTRSKAEKVR. Disordered regions lie at residues 1–29, 110–133, and 147–221; these read MAHEGSRQVRDRGVTRSKAEKVRPPTVPV, AVAEDPTWGEDEEPSACTTDSWAQ, and LENF…SSAG. Ser-242 carries the post-translational modification Phosphoserine. Disordered stretches follow at residues 310 to 331 and 551 to 582; these read RPSASCQQQRAGHSDVRLSAHH and LSSGVPEQEDKEGSTFPPVEQHPIQTGAPKPR. A compositionally biased stretch (polar residues) spans 311 to 320; it reads PSASCQQQRA.

This is an uncharacterized protein from Homo sapiens (Human).